A 185-amino-acid polypeptide reads, in one-letter code: DNA-directed RNA polymerase 22 kDa subunit (185 aa).

The protein belongs to the poxviridae DNA-directed RNA polymerase 22 kDa subunit family. In terms of assembly, the DNA-dependent RNA polymerase used for intermediate and late genes expression consists of eight subunits Rpo30/OPG66, Rpo7/OPG90, Rpo22/OPG103, Rpo147/OPG105, Rpo18/OPG119, Rpo19/OPG131, Rpo132/OPG151 and Rpo35/OPG156. The same holoenzyme, with the addition of the transcription-specificity factor OPG109, is used for early gene expression.

It localises to the virion. The catalysed reaction is RNA(n) + a ribonucleoside 5'-triphosphate = RNA(n+1) + diphosphate. Its function is as follows. Part of the DNA-dependent RNA polymerase which catalyzes the transcription of viral DNA into RNA using the four ribonucleoside triphosphates as substrates. Responsible for the transcription of early, intermediate and late genes. DNA-dependent RNA polymerase associates with the early transcription factor (ETF), itself composed of OPG118 and OPG133, thereby allowing the early genes transcription. Late transcription, and probably also intermediate transcription, require newly synthesized RNA polymerase. This Variola virus (isolate Human/India/Ind3/1967) (VARV) protein is DNA-directed RNA polymerase 22 kDa subunit (OPG103).